The primary structure comprises 1361 residues: MGDDQEDDFPRRLSESMEDLSLDLGALQGSEYLQDLGLGAPSHSQPGETPDSRPTGEEPGRDSLFSSLAGSQDLSRRRSWERSRSCSESWRRLSLDASAVDEEPCLPRTLASLALNLPGGGLKTWTQGCLSGGGTPAESPGKECDSPKKRGRSRSVPVSFYEIRSPEISPGLEVPTPPVQGLEPPVLECMEKDHVEPDHVLIVQQVLQELRQYHGARQRACMSASPGGAHSNLTWFEFLSESEDGAGKNEKSDKSTSVKRRLSCLRSRVTRQKEKGKSPAHLKDKGQDARERRECVNGHQLLQGTFSGPSSCPLCGKPFLSSASLKEHPRGTLLSDGSPALSRNVGMTVSQKGGPQPTPSPAGPGTQLGPITGEMDEADSAFLKFKQTADDSLSLTSPNTESIFVEDPYTASLRSEIESDGHEFEAESWSLAVDAAYAKKQKREVVKRQDVLYELMQTEVHHVRTLKIMLKVYSRALQEELQFSSKAIGRLFPCADDLLETHSHFLARLKERRQESLEEGSDRNYVIQKIGDLLVQQFSGENGERMKEKYGVFCSGHNEAVSHYKLLLQQNKKFQNLIKKIGNFSIVRRLGVQECILLVTQRITKYPVLVERIIQNTEAGTEDYEDLTQALNLIKDIISQVDAKVSECEKGQRLREIAGKMDLKSSSKLKNGLTFRKEDMLQRQLHLEGMLCWKTTSGRLKDILAILLTDVLLLLQEKDQKYVFASVDSKPPVISLQKLIVREVANEEKAMFLISASLQGPEMYEIYTSSKEDRNAWMAHIQRAVESCPDEEEGPFSLPEEERKVVEARATRLRDFQERLSMKDQLIAQSLLEKQQIYLEMAEMGGLEDLPQPRGLFRGGDPSETLQGELILKSAMSEIEGIQSLICRQLGSANGQAEDGGSSTGPPRRAETFAGYDCTNSPTKNGSFKKKVSSTDPRPRDWRGPPNSPDLKLSDSDIPGSSEESPQVVEAPGTESDPRLPTVLESELVQRIQTLSQLLLNLQAVIAHQDSYVETQRAAIQEREKQFRLQSTRGNLLLEQERQRNFEKQREERAALEKLQSQLRHEQQRWERERQWQHQELERAGARLQEREGEARQLRERLEQERAELERQRQAYQHDLERLREAQRAVERERERLELLRRLKKQNTAPGALPPDTLAEAQPPSHPPSFNGEGLEGPRVSMLPSGVGPEYAERPEVARRDSAPTENRLAKSDVPIQLLSATNQFQRQAAVQQQIPTKLAASTKGGKDKGGKSRGSQRWESSASFDLKQQLLLNKLMGKDESTSRNRRSLSPILPGRHSPAPPPDPGFPAPSPPPADSPSEGFSLKAGGTALLPGPPAPSPLPATPLSAKEDASKEDVIFF.

Disordered regions lie at residues 33–88, 131–156, and 244–292; these read LQDL…SCSE, SGGG…SRSV, and DGAG…ARER. The segment covering 50-61 has biased composition (basic and acidic residues); that stretch reads PDSRPTGEEPGR. The segment covering 64–73 has biased composition (polar residues); it reads LFSSLAGSQD. Residues 74–88 are compositionally biased toward basic and acidic residues; that stretch reads LSRRRSWERSRSCSE. 2 stretches are compositionally biased toward basic and acidic residues: residues 245–256 and 271–292; these read GAGKNEKSDKST and RQKE…ARER. The segment at 310–334 adopts a C2H2-type; degenerate zinc-finger fold; that stretch reads SSCPLCGKPFLSSASLKEHPRGTLL. Residues 348–368 are disordered; that stretch reads TVSQKGGPQPTPSPAGPGTQL. Positions 447-644 constitute a DH domain; sequence KRQDVLYELM…KDIISQVDAK (198 aa). Residues 684–786 form the PH domain; the sequence is QLHLEGMLCW…WMAHIQRAVE (103 aa). Disordered stretches follow at residues 893–980, 1143–1211, 1229–1264, and 1277–1361; these read ANGQ…DPRL, LKKQ…RLAK, AAVQ…SSAS, and MGKD…VIFF. Phosphothreonine is present on T912. Residue S921 is modified to Phosphoserine. Residues 1038–1148 are a coiled coil; it reads LEQERQRNFE…LLRRLKKQNT (111 aa). Over residues 1191–1211 the composition is skewed to basic and acidic residues; that stretch reads YAERPEVARRDSAPTENRLAK. The segment covering 1254-1264 has biased composition (polar residues); the sequence is RGSQRWESSAS. Phosphoserine is present on residues S1289 and S1291. Composition is skewed to pro residues over residues 1300-1317 and 1334-1344; these read PAPP…PPAD and PGPPAPSPLPA. Basic and acidic residues predominate over residues 1349–1361; the sequence is AKEDASKEDVIFF.

As to quaternary structure, interacts with SEPT9; the interaction may inhibit GEF activity. Interacts with Gbetagamma subunits GNB1 and GNG2. Interacts with EPB41L4B. Interacts with PATJ (via C-terminus). Expressed in all tissues tested with highest expression in kidney and pancreas. Weakly or not expressed in liver, skeletal muscle and testis. Isoform 1: Expressed in eosinophils. Isoform 2: Expressed in eosinophils. Isoform 3: Expressed in eosinophils. Isoform 4: Not detected in eosinophils.

Its subcellular location is the cytoplasm. The protein resides in the cytoskeleton. It localises to the cell membrane. The protein localises to the apical cell membrane. Functionally, acts as a guanine nucleotide exchange factor (GEF) for RhoA GTPases. Its activation induces formation of actin stress fibers. Also acts as a GEF for RAC1, inducing production of reactive oxygen species (ROS). Does not act as a GEF for CDC42. The G protein beta-gamma (Gbetagamma) subunits of heterotrimeric G proteins act as activators, explaining the integrated effects of LPA and other G-protein coupled receptor agonists on actin stress fiber formation, cell shape change and ROS production. Required for EPB41L4B-mediated regulation of the circumferential actomyosin belt in epithelial cells. In Homo sapiens (Human), this protein is Rho guanine nucleotide exchange factor 18 (ARHGEF18).